The primary structure comprises 373 residues: Probable G-protein coupled receptor 173 (373 aa).

Over 1–26 (MANTTGEPEEVSGALSPPSASAYVKL) the chain is Extracellular. A glycan (N-linked (GlcNAc...) asparagine) is linked at N3. The chain crosses the membrane as a helical span at residues 27–47 (VLLGLIMCVSLAGNAILSLLV). Residues 48–59 (LKERALHKAPYY) are Cytoplasmic-facing. A helical transmembrane segment spans residues 60-80 (FLLDLCLADGIRSAVCFPFVL). Topologically, residues 81 to 97 (ASVRHGSSWTFSALSCK) are extracellular. The cysteines at positions 96 and 174 are disulfide-linked. The helical transmembrane segment at 98 to 118 (IVAFMAVLFCFHAAFMLFCIS) threads the bilayer. Residues 119-139 (VTRYMAIAHHRFYAKRMTLWT) lie on the Cytoplasmic side of the membrane. The helical transmembrane segment at 140-160 (CAAVICMAWTLSVAMAFPPVF) threads the bilayer. The Extracellular segment spans residues 161 to 188 (DVGTYKFIREEDQCIFEHRYFKANDTLG). An N-linked (GlcNAc...) asparagine glycan is attached at N184. The helical transmembrane segment at 189-209 (FMLMLAVLMAATHAVYGKLLL) threads the bilayer. Residues 210-287 (FEYRHRKMKP…VKGEKQLGRM (78 aa)) lie on the Cytoplasmic side of the membrane. Residues 288 to 308 (FYAITLLFLLLWSPYIVACYW) form a helical membrane-spanning segment. Residues 309 to 322 (RVFVKACAVPHRYL) lie on the Extracellular side of the membrane. The helical transmembrane segment at 323-343 (ATAVWMSFAQAAVNPIVCFLL) threads the bilayer. The Cytoplasmic portion of the chain corresponds to 344 to 373 (NKDLKKCLRTHAPCWGTGGAPAPREPYCVM).

This sequence belongs to the G-protein coupled receptor 1 family. Expressed in the ovary, specifically in granulosa cells of follicles that have passed the primary stage and in oocytes (at protein level). Expressed at high levels in brain. Lower levels in small intestine. In brain regions, detected in all regions tested. Highest levels in the cerebellum and cerebral cortex.

The protein resides in the cell membrane. Functionally, is a receptor for the SMIM20 derived peptides Phoenixin-14 and Phoenixin-20. It mediates the Phoenixin-14 and Phoenixin-20 augmentation of gonadotropin-releasing hormone (GNRH) signaling in the hypothalamus and pituitary gland. In the ovary, it mediates the effects of Phoenixin-14 and Phoenixin-20 induced granulosa cell proliferation during follicular growth. In Homo sapiens (Human), this protein is Probable G-protein coupled receptor 173 (GPR173).